Reading from the N-terminus, the 139-residue chain is D-ribose pyranase (139 aa).

Histidine 20 functions as the Proton donor in the catalytic mechanism. Substrate is bound by residues aspartate 28, histidine 106, and 128-130 (YAN).

It belongs to the RbsD / FucU family. RbsD subfamily. In terms of assembly, homodecamer.

The protein localises to the cytoplasm. The catalysed reaction is beta-D-ribopyranose = beta-D-ribofuranose. The protein operates within carbohydrate metabolism; D-ribose degradation; D-ribose 5-phosphate from beta-D-ribopyranose: step 1/2. Its function is as follows. Catalyzes the interconversion of beta-pyran and beta-furan forms of D-ribose. In Escherichia coli O81 (strain ED1a), this protein is D-ribose pyranase.